Here is a 364-residue protein sequence, read N- to C-terminus: Geranylfarnesyl diphosphate synthase, chloroplastic (364 aa).

A chloroplast-targeting transit peptide spans 1–51 (MSHCTIFLYKYFPGKPRYQHCSFLHPLNHKLKSLFLPITGSRFLSNSTFSV). Isopentenyl diphosphate-binding residues include Lys72, Lys111, and His143. Residues Asp150 and Asp156 each contribute to the Mg(2+) site. A dimethylallyl diphosphate-binding site is contributed by Arg161. Arg162 lines the isopentenyl diphosphate pocket. Dimethylallyl diphosphate contacts are provided by Lys249, Thr250, Gln287, Asp294, Lys304, and Lys314.

The protein belongs to the FPP/GGPP synthase family. In terms of assembly, monomer. The cofactor is Mg(2+). In terms of tissue distribution, strongly expressed in glandular trichomes, and, at low levels, in leaves, stems and flowers.

It is found in the plastid. It localises to the chloroplast. It catalyses the reaction isopentenyl diphosphate + (2E,6E,10E)-geranylgeranyl diphosphate = (2E,6E,10E,14E)-geranylfarnesyl diphosphate + diphosphate. The catalysed reaction is 2 isopentenyl diphosphate + (2E,6E)-farnesyl diphosphate = (2E,6E,10E,14E)-geranylfarnesyl diphosphate + 2 diphosphate. The enzyme catalyses 3 isopentenyl diphosphate + (2E)-geranyl diphosphate = (2E,6E,10E,14E)-geranylfarnesyl diphosphate + 3 diphosphate. It carries out the reaction 4 isopentenyl diphosphate + dimethylallyl diphosphate = (2E,6E,10E,14E)-geranylfarnesyl diphosphate + 4 diphosphate. The protein operates within secondary metabolite biosynthesis; terpenoid biosynthesis. It functions in the pathway isoprenoid biosynthesis. Functionally, involved in the biosynthesis of leucosceptrane sesterterpenoids natural products, which are playing defensive roles toward herbivorus insects (e.g. Spodoptera exigua). Catalyzes the condensation of isopentenyl pyrophosphate (IDP) with the allylic pyrophosphates to yield geranylfarnesyl diphosphate (GFDP), the C(25) prenyl diphosphate precursor to all sesterterpenoids. Geranylgeranyl diphosphate (GGPP) is the preferred substrate, however dimethylallyl diphosphate (DMADP), farnesyl diphosphate (FDP) and geranyl diphosphate (GDP) can also be used as allylic substrate. In Leucosceptrum canum (Hairy white-wand), this protein is Geranylfarnesyl diphosphate synthase, chloroplastic.